Here is a 416-residue protein sequence, read N- to C-terminus: MAQANLSETLFKPSFKHRETSTLVRRTRHDQETQGLHSTLEGEKTSSWYRMINRLMWIWRGVNPWEIEDVLSRIAASQADRSNEQLLDTVIGYRGGNWIYEWAKQGADWQQRATESGDDAQTGQFWLNAANLYSIAAYPHIKGDELAEQAQTLANRAYEEAAKYLPYELKELTFPIAGGGTLTGFLHMPSQGKAPFPTVLMCGSLETLQSDYHRLFQDYFAPAGMAMLTIDVPSVGFSSRWKLTQDSSFLHQQVLRALPDVPWVDHCRVTAFGFRFGANIAVRLAYLESQRLRGVACLGPVVHHLLSDPNRQQQVPDMFMDVLASRLGMPFSTDASLKTELGRYSLKTQGLLGRRCPTPMLAGYWENDLLCPKEEASLIVNSSAQGKLMPVNFSPVYQNFDRALQQISRWLQDKVC.

The segment at 19–39 (ETSTLVRRTRHDQETQGLHST) is disordered.

This sequence belongs to the FrsA family.

It catalyses the reaction a carboxylic ester + H2O = an alcohol + a carboxylate + H(+). In terms of biological role, catalyzes the hydrolysis of esters. The polypeptide is Esterase FrsA (Pectobacterium atrosepticum (strain SCRI 1043 / ATCC BAA-672) (Erwinia carotovora subsp. atroseptica)).